Here is a 396-residue protein sequence, read N- to C-terminus: Tyrosine--tRNA ligase (396 aa).

Positions 43–52 (PSSPDIHLGH) match the 'HIGH' region motif. The 'KMSKS' region signature appears at 227–231 (KMSKS). Lysine 230 provides a ligand contact to ATP. Residues 338 to 396 (ICVIDFIIKADLAKSKSEARRLLEQGGVEINSAKISDPGTTVKCGDIIKAGKRRYSKAV) form the S4 RNA-binding domain.

The protein belongs to the class-I aminoacyl-tRNA synthetase family. TyrS type 2 subfamily. As to quaternary structure, homodimer.

The protein resides in the cytoplasm. The enzyme catalyses tRNA(Tyr) + L-tyrosine + ATP = L-tyrosyl-tRNA(Tyr) + AMP + diphosphate + H(+). In terms of biological role, catalyzes the attachment of tyrosine to tRNA(Tyr) in a two-step reaction: tyrosine is first activated by ATP to form Tyr-AMP and then transferred to the acceptor end of tRNA(Tyr). This is Tyrosine--tRNA ligase from Dehalococcoides mccartyi (strain ATCC BAA-2266 / KCTC 15142 / 195) (Dehalococcoides ethenogenes (strain 195)).